We begin with the raw amino-acid sequence, 483 residues long: Aspartyl/glutamyl-tRNA(Asn/Gln) amidotransferase subunit B (483 aa).

Belongs to the GatB/GatE family. GatB subfamily. As to quaternary structure, heterotrimer of A, B and C subunits.

The catalysed reaction is L-glutamyl-tRNA(Gln) + L-glutamine + ATP + H2O = L-glutaminyl-tRNA(Gln) + L-glutamate + ADP + phosphate + H(+). It catalyses the reaction L-aspartyl-tRNA(Asn) + L-glutamine + ATP + H2O = L-asparaginyl-tRNA(Asn) + L-glutamate + ADP + phosphate + 2 H(+). In terms of biological role, allows the formation of correctly charged Asn-tRNA(Asn) or Gln-tRNA(Gln) through the transamidation of misacylated Asp-tRNA(Asn) or Glu-tRNA(Gln) in organisms which lack either or both of asparaginyl-tRNA or glutaminyl-tRNA synthetases. The reaction takes place in the presence of glutamine and ATP through an activated phospho-Asp-tRNA(Asn) or phospho-Glu-tRNA(Gln). The protein is Aspartyl/glutamyl-tRNA(Asn/Gln) amidotransferase subunit B of Brachyspira hyodysenteriae (strain ATCC 49526 / WA1).